A 1214-amino-acid chain; its full sequence is MAVRKKDGGPNVKYYEAADTVTQFDNVRLWLGKNYKKYIQAEPPTNKSLSSLVVQLLQFQEEVFGKHVSNAPLTKLPIKCFLDFKAGGSLCHILAAAYKFKSDQGWRRYDFQNPSRMDRNVEMFMTIEKSLVQNNCLSRPNIFLCPEIEPKLLGKLKDIIKRHQGTVTEDKNNASHVVYPVPGNLEEEEWVRPVMKRDKQVLLHWGYYPDSYDTWIPASEIEASVEDAPTPEKPRKVHAKWILDTDTFNEWMNEEDYEVNDDKNPVSRRKKISAKTLTDEVNSPDSDRRDKKGGNYKKRKRSPSPSPTPEAKKKNAKKGPSTPYTKSKRGHREEEQEDLTKDMDEPSPVPNVEEVTLPKTVNTKKDSESAPVKGGTMTDLDEQEDESMETTGKDEDENSTGNKGEQTKNPDLHEDNVTEQTHHIIIPSYAAWFDYNSVHAIERRALPEFFNGKNKSKTPEIYLAYRNFMIDTYRLNPQEYLTSTACRRNLAGDVCAIMRVHAFLEQWGLINYQVDAESRPTPMGPPPTSHFHVLADTPSGLVPLQPKTPQQTSASQQMLNFPDKGKEKPTDMQNFGLRTDMYTKKNVPSKSKAAASATREWTEQETLLLLEALEMYKDDWNKVSEHVGSRTQDECILHFLRLPIEDPYLEDSEASLGPLAYQPIPFSQSGNPVMSTVAFLASVVDPRVASAAAKSALEEFSKMKEEVPTALVEAHVRKVEEAAKVTGKADPAFGLESSGIAGTTSDEPERIEESGNDEARVEGQATDEKKEPKEPREGGGAIEEEAKEKTSEAPKKDEEKGKEGDSEKESEKSDGDPIVDPEKEKEPKEGQEEVLKEVVESEGERKTKVERDIGEGNLSTAAAAALAAAAVKAKHLAAVEERKIKSLVALLVETQMKKLEIKLRHFEELETIMDREREALEYQRQQLLADRQAFHMEQLKYAEMRARQQHFQQMHQQQQQPPPALPPGSQPIPPTGAAGPPAVHGLAVAPASVVPAPAGSGAPPGSLGPSEQIGQAGSTAGPQQQQPAGAPQPGAVPPGVPPPGPHGPSPFPNQQTPPSMMPGAVPGSGHPGVAGNAPLGLPFGMPPPPPPPAPSIIPFGSLADSISINLPAPPNLHGHHHHLPFAPGTLPPPNLPVSMANPLHPNLPATTTMPSSLPLGPGLGSAAAQSPAIVAAVQGNLLPSASPLPDPGTPLPPDPTAPSPGTVTPVPPPQ.

The interval 1–274 (MAVRKKDGGP…PVSRRKKISA (274 aa)) is marR-like, BRCT and chromo domains module. The region spanning 10–136 (PNVKYYEAAD…IEKSLVQNNC (127 aa)) is the MarR-like domain. The BRCT; N-terminus domain occupies 140–183 (PNIFLCPEIEPKLLGKLKDIIKRHQGTVTEDKNNASHVVYPVPG). A Chromo domain is found at 189–217 (EWVRPVMKRDKQVLLHWGYYPDSYDTWIP). One can recognise a BRCT; C-terminus domain in the interval 233 to 257 (KPRKVHAKWILDTDTFNEWMNEEDY). Residues 257-413 (YEVNDDKNPV…GEQTKNPDLH (157 aa)) form a disordered region. Residues 275-284 (KTLTDEVNSP) are compositionally biased toward polar residues. Residues serine 283, serine 286, serine 302, serine 304, and serine 306 each carry the phosphoserine modification. Lysine 312 is modified (N6-(ADP-ribosyl)lysine). Lysine 326 bears the N6-acetyllysine mark. Positions 331–344 (HREEEQEDLTKDMD) are enriched in basic and acidic residues. Phosphoserine is present on residues serine 347 and serine 387. The span at 379 to 398 (DLDEQEDESMETTGKDEDEN) shows a compositional bias: acidic residues. Positions 424–521 (IIIPSYAAWF…YQVDAESRPT (98 aa)) constitute an SWIRM domain. Threonine 548 carries the phosphothreonine modification. Residues lysine 564, lysine 566, lysine 568, and lysine 592 each participate in a glycyl lysine isopeptide (Lys-Gly) (interchain with G-Cter in SUMO2) cross-link. The 52-residue stretch at 596 to 647 (SATREWTEQETLLLLEALEMYKDDWNKVSEHVGSRTQDECILHFLRLPIEDP) folds into the SANT domain. Lysine 704 participates in a covalent cross-link: Glycyl lysine isopeptide (Lys-Gly) (interchain with G-Cter in SUMO2). A disordered region spans residues 724–852 (KVTGKADPAF…GERKTKVERD (129 aa)). Basic and acidic residues-rich tracts occupy residues 747-777 (EPER…EPRE) and 784-852 (EEAK…VERD). A Glycyl lysine isopeptide (Lys-Gly) (interchain with G-Cter in SUMO2) cross-link involves residue lysine 787. Serine 813 bears the Phosphoserine mark. Lysine 848 participates in a covalent cross-link: Glycyl lysine isopeptide (Lys-Gly) (interchain with G-Cter in SUMO2). A coiled-coil region spans residues 907-934 (EELETIMDREREALEYQRQQLLADRQAF). Disordered regions lie at residues 947–983 (RQQH…PPAV), 997–1092 (PAGS…PPPP), and 1182–1214 (LPSA…PPPQ). The span at 949 to 959 (QHFQQMHQQQQ) shows a compositional bias: low complexity. The segment covering 960–974 (QPPPALPPGSQPIPP) has biased composition (pro residues). Residues 997 to 1033 (PAGSGAPPGSLGPSEQIGQAGSTAGPQQQQPAGAPQP) are compositionally biased toward low complexity. 2 stretches are compositionally biased toward pro residues: residues 1034–1051 (GAVP…PSPF) and 1186–1202 (SPLP…PTAP).

The protein belongs to the SMARCC family. Component of the multiprotein chromatin-remodeling complexes SWI/SNF: SWI/SNF-A (BAF), SWI/SNF-B (PBAF) and related complexes. The canonical complex contains a catalytic subunit (either SMARCA4/BRG1/BAF190A or SMARCA2/BRM/BAF190B) and at least SMARCE1, ACTL6A/BAF53, SMARCC1/BAF155, SMARCC2/BAF170, and SMARCB1/SNF5/BAF47. Other subunits specific to each of the complexes may also be present permitting several possible combinations developmentally and tissue specific. Component of the BAF complex, which includes at least actin (ACTB), ARID1A/BAF250A, ARID1B/BAF250B, SMARCA2/BRM, SMARCA4/BRG1, ACTL6A/BAF53, ACTL6B/BAF53B, SMARCE1/BAF57, SMARCC1/BAF155, SMARCC2/BAF170, SMARCB1/SNF5/INI1, and one or more SMARCD1/BAF60A, SMARCD2/BAF60B, or SMARCD3/BAF60C. In muscle cells, the BAF complex also contains DPF3. Component of neural progenitors-specific chromatin remodeling complex (npBAF complex) composed of at least, ARID1A/BAF250A or ARID1B/BAF250B, SMARCD1/BAF60A, SMARCD3/BAF60C, SMARCA2/BRM/BAF190B, SMARCA4/BRG1/BAF190A, SMARCB1/BAF47, SMARCC1/BAF155, SMARCE1/BAF57, SMARCC2/BAF170, PHF10/BAF45A, ACTL6A/BAF53A and actin. Component of neuron-specific chromatin remodeling complex (nBAF complex) composed of at least, ARID1A/BAF250A or ARID1B/BAF250B, SMARCD1/BAF60A, SMARCD3/BAF60C, SMARCA2/BRM/BAF190B, SMARCA4/BRG1/BAF190A, SMARCB1/BAF47, SMARCC1/BAF155, SMARCE1/BAF57, SMARCC2/BAF170, DPF1/BAF45B, DPF3/BAF45C, ACTL6B/BAF53B and actin. Component of the SWI/SNF-B (PBAF) chromatin remodeling complex, at least composed of SMARCA4/BRG1, SMARCB1/BAF47/SNF5, ACTL6A/BAF53A or ACTL6B/BAF53B, SMARCE1/BAF57, SMARCD1/BAF60A, SMARCD2/BAF60B, perhaps SMARCD3/BAF60C, SMARCC1/BAF155, SMARCC2/BAF170, PBRM1/BAF180, ARID2/BAF200 and actin. May also interact with the SIN3A histone deacetylase transcription repressor complex in conjunction with SMARCA2 and SMARCA4. Interacts with SMARD1. Interacts with KDM6B. Interaction with RCOR1. Interacts with DPF2. Interacts with ERCC6. Interacts with FOS. Post-translationally, mono-ADP-ribosylation at Lys-312 by SIRT6 promotes recruitment to the enhancer region of the Heme oxygenase-1 (HO-1) locus, leading to transcription activation of the locus. As to expression, ubiquitously expressed.

It localises to the nucleus. Functionally, involved in transcriptional activation and repression of select genes by chromatin remodeling (alteration of DNA-nucleosome topology). Component of SWI/SNF chromatin remodeling complexes that carry out key enzymatic activities, changing chromatin structure by altering DNA-histone contacts within a nucleosome in an ATP-dependent manner. Can stimulate the ATPase activity of the catalytic subunit of these complexes. May be required for CoREST dependent repression of neuronal specific gene promoters in non-neuronal cells. Belongs to the neural progenitors-specific chromatin remodeling complex (npBAF complex) and the neuron-specific chromatin remodeling complex (nBAF complex). During neural development a switch from a stem/progenitor to a postmitotic chromatin remodeling mechanism occurs as neurons exit the cell cycle and become committed to their adult state. The transition from proliferating neural stem/progenitor cells to postmitotic neurons requires a switch in subunit composition of the npBAF and nBAF complexes. As neural progenitors exit mitosis and differentiate into neurons, npBAF complexes which contain ACTL6A/BAF53A and PHF10/BAF45A, are exchanged for homologous alternative ACTL6B/BAF53B and DPF1/BAF45B or DPF3/BAF45C subunits in neuron-specific complexes (nBAF). The npBAF complex is essential for the self-renewal/proliferative capacity of the multipotent neural stem cells. The nBAF complex along with CREST plays a role regulating the activity of genes essential for dendrite growth. Critical regulator of myeloid differentiation, controlling granulocytopoiesis and the expression of genes involved in neutrophil granule formation. The sequence is that of SWI/SNF complex subunit SMARCC2 (SMARCC2) from Homo sapiens (Human).